The chain runs to 277 residues: Energy-coupling factor transporter ATP-binding protein EcfA1 (277 aa).

Positions 4–238 (IETQDLCHTY…PDLLSSVRLD (235 aa)) constitute an ABC transporter domain. 37–44 (GPNGAGKS) contributes to the ATP binding site.

It belongs to the ABC transporter superfamily. Energy-coupling factor EcfA family. As to quaternary structure, forms a stable energy-coupling factor (ECF) transporter complex composed of 2 membrane-embedded substrate-binding proteins (S component), 2 ATP-binding proteins (A component) and 2 transmembrane proteins (T component).

Its subcellular location is the cell membrane. ATP-binding (A) component of a common energy-coupling factor (ECF) ABC-transporter complex. Unlike classic ABC transporters this ECF transporter provides the energy necessary to transport a number of different substrates. The protein is Energy-coupling factor transporter ATP-binding protein EcfA1 of Methanospirillum hungatei JF-1 (strain ATCC 27890 / DSM 864 / NBRC 100397 / JF-1).